Here is a 704-residue protein sequence, read N- to C-terminus: Polyribonucleotide nucleotidyltransferase (704 aa).

Aspartate 485 and aspartate 491 together coordinate Mg(2+). Residues 552–611 (PKILTMTINPDKIRDVIGPSGKMINKIIEDTGVKIDIEQDGTIYISSADTNMNNKAREII) enclose the KH domain. Positions 621-689 (GQMYLGTVKR…NQGRVNLSRK (69 aa)) constitute an S1 motif domain.

Belongs to the polyribonucleotide nucleotidyltransferase family. Requires Mg(2+) as cofactor.

It localises to the cytoplasm. It catalyses the reaction RNA(n+1) + phosphate = RNA(n) + a ribonucleoside 5'-diphosphate. Involved in mRNA degradation. Catalyzes the phosphorolysis of single-stranded polyribonucleotides processively in the 3'- to 5'-direction. The polypeptide is Polyribonucleotide nucleotidyltransferase (Halalkalibacterium halodurans (strain ATCC BAA-125 / DSM 18197 / FERM 7344 / JCM 9153 / C-125) (Bacillus halodurans)).